Reading from the N-terminus, the 121-residue chain is Phosphoribosyl-AMP cyclohydrolase (121 aa).

Residue Asp-76 coordinates Mg(2+). Zn(2+) is bound at residue Cys-77. Asp-78 and Asp-80 together coordinate Mg(2+). Zn(2+) is bound by residues Cys-93 and Cys-100.

Belongs to the PRA-CH family. Homodimer. Requires Mg(2+) as cofactor. Zn(2+) serves as cofactor.

The protein localises to the cytoplasm. It catalyses the reaction 1-(5-phospho-beta-D-ribosyl)-5'-AMP + H2O = 1-(5-phospho-beta-D-ribosyl)-5-[(5-phospho-beta-D-ribosylamino)methylideneamino]imidazole-4-carboxamide. It participates in amino-acid biosynthesis; L-histidine biosynthesis; L-histidine from 5-phospho-alpha-D-ribose 1-diphosphate: step 3/9. In terms of biological role, catalyzes the hydrolysis of the adenine ring of phosphoribosyl-AMP. This is Phosphoribosyl-AMP cyclohydrolase from Methanococcoides burtonii (strain DSM 6242 / NBRC 107633 / OCM 468 / ACE-M).